Reading from the N-terminus, the 371-residue chain is tRNA-specific 2-thiouridylase MnmA (371 aa).

ATP contacts are provided by residues 13 to 20 (GMSGGVDS) and methionine 39. An interaction with target base in tRNA region spans residues 99-101 (NPD). The Nucleophile role is filled by cysteine 104. The cysteines at positions 104 and 200 are disulfide-linked. ATP is bound at residue glycine 128. The interval 150 to 152 (KDQ) is interaction with tRNA. The Cysteine persulfide intermediate role is filled by cysteine 200. Residues 308–309 (RY) form an interaction with tRNA region.

Belongs to the MnmA/TRMU family.

Its subcellular location is the cytoplasm. The enzyme catalyses S-sulfanyl-L-cysteinyl-[protein] + uridine(34) in tRNA + AH2 + ATP = 2-thiouridine(34) in tRNA + L-cysteinyl-[protein] + A + AMP + diphosphate + H(+). Catalyzes the 2-thiolation of uridine at the wobble position (U34) of tRNA, leading to the formation of s(2)U34. This is tRNA-specific 2-thiouridylase MnmA from Geobacillus thermodenitrificans (strain NG80-2).